The chain runs to 224 residues: 7-cyano-7-deazaguanine synthase (224 aa).

10 to 20 (VSGGLDSATVL) contributes to the ATP binding site. 4 residues coordinate Zn(2+): cysteine 189, cysteine 199, cysteine 202, and cysteine 205.

The protein belongs to the QueC family. Zn(2+) is required as a cofactor.

The catalysed reaction is 7-carboxy-7-deazaguanine + NH4(+) + ATP = 7-cyano-7-deazaguanine + ADP + phosphate + H2O + H(+). It functions in the pathway purine metabolism; 7-cyano-7-deazaguanine biosynthesis. Its function is as follows. Catalyzes the ATP-dependent conversion of 7-carboxy-7-deazaguanine (CDG) to 7-cyano-7-deazaguanine (preQ(0)). This Nitrosococcus oceani (strain ATCC 19707 / BCRC 17464 / JCM 30415 / NCIMB 11848 / C-107) protein is 7-cyano-7-deazaguanine synthase.